A 277-amino-acid chain; its full sequence is Large ribosomal subunit protein uL2 (277 aa).

Disordered regions lie at residues Pro36–Gly55 and Trp213–Lys277.

The protein belongs to the universal ribosomal protein uL2 family. Part of the 50S ribosomal subunit. Forms a bridge to the 30S subunit in the 70S ribosome.

Functionally, one of the primary rRNA binding proteins. Required for association of the 30S and 50S subunits to form the 70S ribosome, for tRNA binding and peptide bond formation. It has been suggested to have peptidyltransferase activity; this is somewhat controversial. Makes several contacts with the 16S rRNA in the 70S ribosome. The polypeptide is Large ribosomal subunit protein uL2 (Staphylococcus saprophyticus subsp. saprophyticus (strain ATCC 15305 / DSM 20229 / NCIMB 8711 / NCTC 7292 / S-41)).